The sequence spans 959 residues: Vacuolar membrane protease (959 aa).

The Cytoplasmic segment spans residues 1–13 (MARLNPLSFTPGP). Residues 14-34 (VIFFTCAVYIALFAALLTVHL) traverse the membrane as a helical segment. Residues 35–378 (RVPDYPSKTP…KVFVVFQLHT (344 aa)) are Vacuolar-facing. Residues N48, N102, and N105 are each glycosylated (N-linked (GlcNAc...) asparagine). The segment at 128 to 149 (GSEDDEPYHSPQSSPPGERRLD) is disordered. Positions 158 and 170 each coordinate Zn(2+). The Proton acceptor role is filled by E204. Residues E205, E230, and H303 each coordinate Zn(2+). The chain crosses the membrane as a helical span at residues 379–399 (MFALCVTLLVVAPLFLIGLTF). The Cytoplasmic portion of the chain corresponds to 400-432 (GLSKADKNYLFARKAYMYSSDDDHPVHLYGWRG). The helical transmembrane segment at 433 to 453 (FFRFPIVFSIATAVVVGLAYL) threads the bilayer. The Vacuolar portion of the chain corresponds to 454 to 463 (MVRLNPLILY). A helical membrane pass occupies residues 464-484 (SSPYAVWSMMLSAWFSVAWFF). Over 485–498 (SRGASAMRPSALQR) the chain is Cytoplasmic. Residues 499–519 (MYALIWLFAGSFALLAFVTVL) form a helical membrane-spanning segment. Over 520 to 524 (SNNYQ) the chain is Vacuolar. Residues 525–545 (VAGGYFALFYFAGIFLALVLS) traverse the membrane as a helical segment. Residues 546-645 (YLELFFAPTK…YPGEQDWSGK (100 aa)) lie on the Cytoplasmic side of the membrane. 2 disordered regions span residues 566 to 594 (DEPV…DATE) and 606 to 635 (FARH…LKQP). Residues 612–626 (RRDSIDDENGNRDEE) show a composition bias toward basic and acidic residues. The chain crosses the membrane as a helical span at residues 646–666 (LPGWLWLLQLLLVAPIVVILV). Residues 667 to 688 (GQIALLLTSALHQTPADGNSSL) lie on the Vacuolar side of the membrane. An N-linked (GlcNAc...) asparagine glycan is attached at N685. A helical transmembrane segment spans residues 689-709 (FVYLAFALLTTLLLAPIGPFI). Topologically, residues 710 to 716 (HRFTWHV) are cytoplasmic. A helical transmembrane segment spans residues 717–737 (PTFVFLVCVATVIYNLVAFPF). Residues 738–959 (SREHRLKVYF…LVEGFKYFQV (222 aa)) lie on the Vacuolar side of the membrane. N785, N818, N834, N864, and N899 each carry an N-linked (GlcNAc...) asparagine glycan.

It belongs to the peptidase M28 family. It depends on Zn(2+) as a cofactor.

It is found in the vacuole membrane. In terms of biological role, may be involved in vacuolar sorting and osmoregulation. In Phaeosphaeria nodorum (strain SN15 / ATCC MYA-4574 / FGSC 10173) (Glume blotch fungus), this protein is Vacuolar membrane protease.